Consider the following 503-residue polypeptide: AMP phosphorylase (503 aa).

Residues G168, 194-199 (SRAITS), and T203 contribute to the AMP site. Residue D256 is the Proton donor of the active site. Residues S264 and K288 each coordinate AMP.

It belongs to the thymidine/pyrimidine-nucleoside phosphorylase family. Type 2 subfamily.

It catalyses the reaction AMP + phosphate = alpha-D-ribose 1,5-bisphosphate + adenine. It carries out the reaction CMP + phosphate = cytosine + alpha-D-ribose 1,5-bisphosphate. The catalysed reaction is UMP + phosphate = alpha-D-ribose 1,5-bisphosphate + uracil. Its function is as follows. Catalyzes the conversion of AMP and phosphate to adenine and ribose 1,5-bisphosphate (R15P). Exhibits phosphorylase activity toward CMP and UMP in addition to AMP. Functions in an archaeal AMP degradation pathway, together with R15P isomerase and RubisCO. This is AMP phosphorylase from Pyrococcus horikoshii (strain ATCC 700860 / DSM 12428 / JCM 9974 / NBRC 100139 / OT-3).